Reading from the N-terminus, the 203-residue chain is Pyridoxine/pyridoxamine 5'-phosphate oxidase (203 aa).

Residues 51-56 (RMVLLK), 66-67 (YT), R72, K73, and Q95 contribute to the FMN site. K56 contacts substrate. Positions 113, 117, and 121 each coordinate substrate. Residues 130–131 (QS) and W175 each bind FMN. 181–183 (RLH) provides a ligand contact to substrate. FMN is bound at residue R185.

The protein belongs to the pyridoxamine 5'-phosphate oxidase family. Homodimer. It depends on FMN as a cofactor.

It carries out the reaction pyridoxamine 5'-phosphate + O2 + H2O = pyridoxal 5'-phosphate + H2O2 + NH4(+). It catalyses the reaction pyridoxine 5'-phosphate + O2 = pyridoxal 5'-phosphate + H2O2. The protein operates within cofactor metabolism; pyridoxal 5'-phosphate salvage; pyridoxal 5'-phosphate from pyridoxamine 5'-phosphate: step 1/1. Its pathway is cofactor metabolism; pyridoxal 5'-phosphate salvage; pyridoxal 5'-phosphate from pyridoxine 5'-phosphate: step 1/1. Functionally, catalyzes the oxidation of either pyridoxine 5'-phosphate (PNP) or pyridoxamine 5'-phosphate (PMP) into pyridoxal 5'-phosphate (PLP). In Novosphingobium aromaticivorans (strain ATCC 700278 / DSM 12444 / CCUG 56034 / CIP 105152 / NBRC 16084 / F199), this protein is Pyridoxine/pyridoxamine 5'-phosphate oxidase.